We begin with the raw amino-acid sequence, 283 residues long: Methylamine utilization protein MauF (283 aa).

The next 7 helical transmembrane spans lie at Phe37 to Ala57, Met58 to Leu78, Gly116 to Phe136, Tyr143 to Met163, Ile187 to Ile207, Ile210 to Ile230, and Val263 to Leu283.

The protein localises to the cell membrane. The protein operates within one-carbon metabolism; methylamine degradation. This is Methylamine utilization protein MauF (mauF) from Methylobacillus flagellatus (strain ATCC 51484 / DSM 6875 / VKM B-1610 / KT).